Here is a 350-residue protein sequence, read N- to C-terminus: Biotin synthase 1 (350 aa).

The region spanning 71–296 (EEVEVEGIIS…KTILRFAGGR (226 aa)) is the Radical SAM core domain. Positions 86, 90, and 93 each coordinate [4Fe-4S] cluster. The [2Fe-2S] cluster site is built by cysteine 129, cysteine 221, and arginine 291.

It belongs to the radical SAM superfamily. Biotin synthase family. Homodimer. [4Fe-4S] cluster is required as a cofactor. [2Fe-2S] cluster serves as cofactor.

The enzyme catalyses (4R,5S)-dethiobiotin + (sulfur carrier)-SH + 2 reduced [2Fe-2S]-[ferredoxin] + 2 S-adenosyl-L-methionine = (sulfur carrier)-H + biotin + 2 5'-deoxyadenosine + 2 L-methionine + 2 oxidized [2Fe-2S]-[ferredoxin]. The protein operates within cofactor biosynthesis; biotin biosynthesis; biotin from 7,8-diaminononanoate: step 2/2. Catalyzes the conversion of dethiobiotin (DTB) to biotin by the insertion of a sulfur atom into dethiobiotin via a radical-based mechanism. The polypeptide is Biotin synthase 1 (Corynebacterium diphtheriae (strain ATCC 700971 / NCTC 13129 / Biotype gravis)).